We begin with the raw amino-acid sequence, 600 residues long: Polypeptide N-acetylgalactosaminyltransferase (600 aa).

Residues 1 to 7 (MVRRKLR) are Cytoplasmic-facing. A helical; Signal-anchor for type II membrane protein transmembrane segment spans residues 8–28 (LLVILAGIWLVGIVVYLFKGD). Over 29–600 (DQSEFEKRVI…KWTFSLSKNR (572 aa)) the chain is Lumenal. 5 cysteine pairs are disulfide-bonded: Cys-154-Cys-382, Cys-373-Cys-451, Cys-484-Cys-501, Cys-524-Cys-541, and Cys-567-Cys-583. Positions 163-268 (LPDTSVIITF…EKWLEPLLDR (106 aa)) are catalytic subdomain A. Substrate contacts are provided by Thr-171, Asp-204, and Arg-229. A Mn(2+)-binding site is contributed by Asp-252. Position 253 (Ser-253) interacts with substrate. Residue His-254 participates in Mn(2+) binding. The interval 328 to 390 (PIRTPMIAGG…PCSRVGHVFR (63 aa)) is catalytic subdomain B. Trp-359 provides a ligand contact to substrate. His-387 contacts Mn(2+). Arg-390, His-393, and Tyr-395 together coordinate substrate. Residues 466-595 (KIPSVQDIAF…SSYTQKWTFS (130 aa)) enclose the Ricin B-type lectin domain.

Belongs to the glycosyltransferase 2 family. GalNAc-T subfamily. It depends on Mn(2+) as a cofactor. Post-translationally, O-glycosylated.

It localises to the golgi apparatus membrane. It carries out the reaction L-seryl-[protein] + UDP-N-acetyl-alpha-D-galactosamine = a 3-O-[N-acetyl-alpha-D-galactosaminyl]-L-seryl-[protein] + UDP + H(+). The enzyme catalyses L-threonyl-[protein] + UDP-N-acetyl-alpha-D-galactosamine = a 3-O-[N-acetyl-alpha-D-galactosaminyl]-L-threonyl-[protein] + UDP + H(+). It functions in the pathway protein modification; protein glycosylation. No change in activity by addition of up to 10% methanol or glycerol, or 5% acetonitrile. 40% reduction in activity by 10% acetonitrile or by lyophilization. Activity requires divalent cations, the best being Mn(2+) (10-20 mM), followed by Co(2+), Mg(2+) and Ca(2+). Loss of activity with Cu(2+) or in the presence of EDTA. Inhibited by UDP, but not by UMP, UTP, ADP or GDP nucleotides. No inhibition by galactose, N-acetylglucosamine or N-acetylgalactosamine sugars. Its function is as follows. Catalyzes the initial reaction in O-linked oligosaccharide biosynthesis, the transfer of an N-acetyl-D-galactosamine residue to a serine or threonine residue on the protein receptor. Has a broad substrate specificity. Acceptor peptides include Muc2, Muc5Ac, Muc1a and Muc1a', with Muc2 as the best acceptor. Acts on non-glycosylated and mono- or multi-glycosylated peptide substrates. Transfers preferably to threonine rather than serine residue. Thr-15 is the most preferred site of glycosylation in Muc2 peptide PTTTPITTTTTVTPTPTPTGTQTK having proline residues at position -1, and at positions +1 and +3, where the number represents the distance from the C-terminal and N-terminal hydroxyl amino acid, respectively. Transfer of the N-acetyl-D-galactosamine (GalNAc) is optimal with proline residues at positions -3, -1, +1 and +3, but other amino acids are tolerated, although some, such as phenylalanine, isoleucine or leucine at -1, or lysine at +3 prevent the transfer completely. Second GalNAc is transferred to Muc2 Thr-2 or Thr-13, both of which have two proline residues nearby. Up to nine sites can be glycosylated within Muc2, but eight are used simultaneously since Thr-19 and Thr-21 are not detected to be glycosylated at the same time. Glycosylation is not detected of a potential site, which is next to an already glycosylated site, but only one amino acid is needed in between two glycosylation sites. Ser-5 is the preferred glycosylation site in Muc5Ac peptide GTTPSPVPTTSTTSAP into which up to four GalNAcs can be attached. Only the threonine residues are detected as pontential glycosylation sites in Muc1a APPAHGVTSAPDTRPAPGC and Muc1a' AHGVTSAPDTR peptides. Transferase activity is restricted to UDP-GalNAc as a donor, and none of the nucleotide sugars UDP-Gal, UDP-GlcNAc, GDP-fucose, UDP-xylose, UDP-glucuronic acid or CMP-neuraminic acid are utilized as donors. The sequence is that of Polypeptide N-acetylgalactosaminyltransferase from Biomphalaria glabrata (Bloodfluke planorb).